Consider the following 553-residue polypeptide: Cysteine desulfurase IscS (553 aa).

A compositionally biased stretch (low complexity) spans 102-122 (NNISSNNTQYNNNSSNSGSLN). A disordered region spans residues 102–125 (NNISSNNTQYNNNSSNSGSLNDEG).

The protein belongs to the class-V pyridoxal-phosphate-dependent aminotransferase family. NifS/IscS subfamily. Homotetramer. Interacts with Isd11; the interaction enhances cysteine desulfurase activity of IscS. Interacts with IscU. Component of a complex, at least composed of IscS, Isd11 and IscU. Pyridoxal 5'-phosphate serves as cofactor.

Its subcellular location is the mitochondrion. The catalysed reaction is (sulfur carrier)-H + L-cysteine = (sulfur carrier)-SH + L-alanine. The protein operates within cofactor biosynthesis; iron-sulfur cluster biosynthesis. In terms of biological role, catalyzes sulfur activation and mobilization in iron-sulfur cluster formation (ISC) pathway for iron-sulfur (Fe-S) cluster biogenesis. Active when in complex with a partner protein Isd11. The protein is Cysteine desulfurase IscS of Plasmodium falciparum (isolate 3D7).